The following is a 545-amino-acid chain: MGNCNACVRPDSKESKPSSKPKKPNRDRKLNPFAGDFTRSPAPIRVLKDVIPMSNQTQISDKYILGRELGRGEFGITYLCTDRETHEALACKSISKRKLRTAVDIEDVRREVAIMSTLPEHPNVVKLKASYEDNENVHLVMELCEGGELFDRIVARGHYTERAAAAVARTIAEVVMMCHSNGVMHRDLKPENFLFANKKENSPLKAIDFGLSVFFKPGDKFTEIVGSPYYMAPEVLKRDYGPGVDVWSAGVIIYILLCGVPPFWAETEQGVALAILRGVLDFKRDPWPQISESAKSLVKQMLDPDPTKRLTAQQVLAHPWIQNAKKAPNVPLGDIVRSRLKQFSMMNRFKKKVLRVIAEHLSIQEVEVIKNMFSLMDDDKDGKITYPELKAGLQKVGSQLGEPEIKMLMEVADVDGNGFLDYGEFVAVIIHLQKIENDELFKLAFMFFDKDGSTYIELDELREALADELGEPDASVLSDIMREVDTDKDGRINYDEFVTMMKAGTDWRKASRQYSRERFKSLSINLMKDGSLHLHDALTGQTVPV.

The disordered stretch occupies residues 1–36 (MGNCNACVRPDSKESKPSSKPKKPNRDRKLNPFAGD). Gly-2 carries N-myristoyl glycine lipidation. In terms of domain architecture, Protein kinase spans 63–321 (YILGRELGRG…AQQVLAHPWI (259 aa)). Residues 69–77 (LGRGEFGIT) and Lys-92 each bind ATP. Residue Asp-187 is the Proton acceptor of the active site. Position 227 is a phosphoserine (Ser-227). Residues 327-357 (APNVPLGDIVRSRLKQFSMMNRFKKKVLRVI) form an autoinhibitory domain region. EF-hand domains follow at residues 364 to 399 (QEVE…VGSQ), 400 to 435 (LGEP…LQKI), 436 to 471 (ENDE…ELGE), and 472 to 507 (PDAS…GTDW). Positions 377, 379, 381, 383, 388, 413, 415, 417, 424, 449, 451, 453, 455, 460, 485, 487, 489, 491, and 496 each coordinate Ca(2+).

The protein belongs to the protein kinase superfamily. Ser/Thr protein kinase family. CDPK subfamily.

The protein localises to the membrane. It carries out the reaction L-seryl-[protein] + ATP = O-phospho-L-seryl-[protein] + ADP + H(+). It catalyses the reaction L-threonyl-[protein] + ATP = O-phospho-L-threonyl-[protein] + ADP + H(+). With respect to regulation, activated by calcium. Autophosphorylation may play an important role in the regulation of the kinase activity. May play a role in signal transduction pathways that involve calcium as a second messenger. May be a positive regulator controlling stress signal transduction. This is Calcium-dependent protein kinase 10 (CPK10) from Arabidopsis thaliana (Mouse-ear cress).